A 197-amino-acid chain; its full sequence is Holliday junction branch migration complex subunit RuvA (197 aa).

A domain I region spans residues 1–64 (MIALLRGLVV…EDVLALYGFL (64 aa)). Residues 65–143 (TQDEKALFEK…AATGEEPGAP (79 aa)) are domain II. The segment at 144-153 (AAEALSPIDQ) is flexible linker. Positions 153–197 (QDVLSALLNLGCARPQAEAAVRKAKAAGASLDFEPLFRRALELVR) are domain III.

This sequence belongs to the RuvA family. As to quaternary structure, homotetramer. Forms an RuvA(8)-RuvB(12)-Holliday junction (HJ) complex. HJ DNA is sandwiched between 2 RuvA tetramers; dsDNA enters through RuvA and exits via RuvB. An RuvB hexamer assembles on each DNA strand where it exits the tetramer. Each RuvB hexamer is contacted by two RuvA subunits (via domain III) on 2 adjacent RuvB subunits; this complex drives branch migration. In the full resolvosome a probable DNA-RuvA(4)-RuvB(12)-RuvC(2) complex forms which resolves the HJ.

It is found in the cytoplasm. Functionally, the RuvA-RuvB-RuvC complex processes Holliday junction (HJ) DNA during genetic recombination and DNA repair, while the RuvA-RuvB complex plays an important role in the rescue of blocked DNA replication forks via replication fork reversal (RFR). RuvA specifically binds to HJ cruciform DNA, conferring on it an open structure. The RuvB hexamer acts as an ATP-dependent pump, pulling dsDNA into and through the RuvAB complex. HJ branch migration allows RuvC to scan DNA until it finds its consensus sequence, where it cleaves and resolves the cruciform DNA. The sequence is that of Holliday junction branch migration complex subunit RuvA from Solibacter usitatus (strain Ellin6076).